The sequence spans 525 residues: Probable CoA ligase CCL9 (525 aa).

Residues 171 to 179 (TSGTTSRPK), 311 to 316 (EAYAMT), aspartate 395, 407 to 410 (LVGR), and lysine 501 contribute to the ATP site. Positions 242 to 311 (SASTFWSDMI…EESFGAPVLE (70 aa)) are SBD1. The tract at residues 312–375 (AYAMTEAAHL…IRGPNVTKGY (64 aa)) is SBD2.

It belongs to the ATP-dependent AMP-binding enzyme family.

Its subcellular location is the cytoplasm. It is found in the cytosol. This Humulus lupulus (European hop) protein is Probable CoA ligase CCL9.